Reading from the N-terminus, the 144-residue chain is 3-dehydroquinate dehydratase (144 aa).

Y24 (proton acceptor) is an active-site residue. Residues N73, H79, and D86 each contribute to the substrate site. The active-site Proton donor is H99. Residues L100–S101 and R110 contribute to the substrate site.

This sequence belongs to the type-II 3-dehydroquinase family. As to quaternary structure, homododecamer.

The catalysed reaction is 3-dehydroquinate = 3-dehydroshikimate + H2O. The protein operates within metabolic intermediate biosynthesis; chorismate biosynthesis; chorismate from D-erythrose 4-phosphate and phosphoenolpyruvate: step 3/7. In terms of biological role, catalyzes a trans-dehydration via an enolate intermediate. This chain is 3-dehydroquinate dehydratase, found in Shewanella sp. (strain ANA-3).